We begin with the raw amino-acid sequence, 147 residues long: Hemoglobin subunit epsilon (147 aa).

The 145-residue stretch at 3-147 folds into the Globin domain; that stretch reads HWSAEEKQLI…VAHALPRKYH (145 aa). Positions 64 and 93 each coordinate heme b.

It belongs to the globin family. Heterotetramer of two epsilon chains and two alpha chains. Red blood cells.

Functionally, beta-type chain found in early embryos. This Cairina moschata (Muscovy duck) protein is Hemoglobin subunit epsilon (HBE).